The primary structure comprises 208 residues: 3-demethoxyubiquinol 3-hydroxylase (208 aa).

6 residues coordinate Fe cation: Glu-57, Glu-87, His-90, Glu-139, Glu-171, and His-174.

This sequence belongs to the COQ7 family. Fe cation serves as cofactor.

The protein localises to the cell membrane. It catalyses the reaction a 5-methoxy-2-methyl-3-(all-trans-polyprenyl)benzene-1,4-diol + AH2 + O2 = a 3-demethylubiquinol + A + H2O. It participates in cofactor biosynthesis; ubiquinone biosynthesis. Catalyzes the hydroxylation of 2-nonaprenyl-3-methyl-6-methoxy-1,4-benzoquinol during ubiquinone biosynthesis. This Burkholderia pseudomallei (strain 1106a) protein is 3-demethoxyubiquinol 3-hydroxylase.